The primary structure comprises 169 residues: Glycine-rich RNA-binding protein GRP2A (169 aa).

One can recognise an RRM domain in the interval 8 to 86 (YRCFVGGLAW…RSITVNEAQS (79 aa)). Disordered regions lie at residues 69 to 100 (MNGQ…GGGG) and 125 to 169 (YSGG…GGGW). Residues 89–100 (SGAGGGGRGGGG) are compositionally biased toward gly residues.

As to expression, predominantly expressed in meristematic and growing tissue.

It is found in the nucleus. In terms of biological role, may play a general role in circadian phenomena associated with meristematic tissue. The protein is Glycine-rich RNA-binding protein GRP2A of Sinapis alba (White mustard).